A 317-amino-acid chain; its full sequence is Transcription factor elt-3 (317 aa).

Positions 1–34 (METANYYLPSPPYSSTSSSDSRESRMNTPIPTTY) are disordered. The GATA-type zinc finger occupies 244-268 (CSNCKTRETTLWRRNGEGGVECNAC). A disordered region spans residues 290–317 (KRNRRPRNESPNSAIRNTHQRHGHAAAC). The segment covering 307–317 (THQRHGHAAAC) has biased composition (basic residues).

As to quaternary structure, interacts with skn-1; interaction may enhance transcriptional activation of target genes. In terms of tissue distribution, expressed in head, trunk and tail. Expression decreases with age in the hypodermal cells and the pharyngeal-intestinal valve cells in the head, eventually showing little or no expression in about 14 day old worms. Expressed in hypodermal, but not in intestinal, cells at 1 day of age. Expression in the hypodermal and intestinal cells in the trunk region decreases quickly between day 3 and day 5 of adulthood. Expression in the tail between days 3 and 14 stays approximately uniform.

It is found in the nucleus. Functionally, transcription factor. Required, in concert with signal transducer and transcription factor sta-2, for up-regulation of the vacuolar H(+)-ATPase and acceleration of lysosome maturation at molt. Involved in regulating hypodermal development, perhaps acting downstream of transcription factor elt-1. Modulates environmentally induced changes in collagen gene expression, including rol-6, sqt-1, lon-3, and dpy-13. Involved in regulating expression of various genes, including gst-4, sod-3, ugt-9, and col-144. In response to oxidative stress, required to up-regulate expression of gst-4 mRNA. Regulated by the Insulin/IGF-1-like signaling (IIS) mediated pathway. Plays a role in longevity. May regulate the expression of genes that control sensitivity to osmotic stress, in conjunction with the GATA region-binding transcription factor elt-2. May form a transcriptional circuit with GATA factors egl-18 and elt-6. In Caenorhabditis elegans, this protein is Transcription factor elt-3.